The primary structure comprises 543 residues: Carboxypeptidase Y homolog A (543 aa).

The first 17 residues, 1–17, serve as a signal peptide directing secretion; the sequence is MRVAASALLAGAASAAV. Positions 18-128 are excised as a propeptide; the sequence is APQQQILKFP…KLEQFDLRVK (111 aa). 5 disulfide bridges follow: Cys182/Cys421, Cys316/Cys330, Cys340/Cys363, Cys347/Cys356, and Cys385/Cys391. N-linked (GlcNAc...) asparagine glycosylation occurs at Asn213. Residue Ser269 is part of the active site. Residue Asp460 is part of the active site. Residue Asn508 is glycosylated (N-linked (GlcNAc...) asparagine). The active site involves His519.

Belongs to the peptidase S10 family.

It localises to the vacuole. It catalyses the reaction Release of a C-terminal amino acid with broad specificity.. Vacuolar carboxypeptidase involved in degradation of small peptides. Digests preferentially peptides containing an aliphatic or hydrophobic residue in P1' position, as well as methionine, leucine or phenylalanine in P1 position of ester substrate. This chain is Carboxypeptidase Y homolog A (CPYA), found in Phaeosphaeria nodorum (strain SN15 / ATCC MYA-4574 / FGSC 10173) (Glume blotch fungus).